Reading from the N-terminus, the 1499-residue chain is Multidrug resistance protein CDR2 (1499 aa).

Topologically, residues 1–511 are cytoplasmic; it reads MSTANTSLSQ…NFLRMKGDPS (511 aa). In terms of domain architecture, ABC transporter 1 spans 148–402; it reads FTTEAINKLK…FENMGWKCPQ (255 aa). Transmembrane regions (helical) follow at residues 512–532, 546–566, 596–616, 621–641, 660–680, and 763–783; these read IPLI…SVFF, GALF…ILSL, LPVK…MVNL, GNFF…SHMF, VFLL…YILG, and FGIT…LTEF. Topologically, residues 784 to 1193 are cytoplasmic; sequence NKGAMQKGEI…TIVQDWRSPG (410 aa). An ABC transporter 2 domain is found at 857-1101; sequence FFWRDLTYQV…MINYFEKYGA (245 aa). 893-900 lines the ATP pocket; the sequence is GASGAGKT. 6 helical membrane-spanning segments follow: residues 1194–1214, 1229–1249, 1279–1299, 1315–1335, 1354–1374, and 1465–1485; these read YIYS…FSFF, AVFM…PYFV, IPFQ…PVGL, LMWM…QLAI, LCLM…FWIF, and FGIF…FYWL.

The protein belongs to the ABC transporter superfamily. ABCG family. PDR (TC 3.A.1.205) subfamily.

The protein localises to the membrane. Multidrug efflux transporter. Confers resistance to azole antifungal agents, to other antifungals (terbinafine, amorolfine) and to a variety of metabolic inhibitors. This is Multidrug resistance protein CDR2 (CDR2) from Candida albicans (strain SC5314 / ATCC MYA-2876) (Yeast).